Consider the following 185-residue polypeptide: Peptidyl-tRNA hydrolase (185 aa).

Tyr-14 lines the tRNA pocket. His-19 (proton acceptor) is an active-site residue. TRNA contacts are provided by Tyr-65, Asn-67, and Asn-113.

Belongs to the PTH family. As to quaternary structure, monomer.

It is found in the cytoplasm. It catalyses the reaction an N-acyl-L-alpha-aminoacyl-tRNA + H2O = an N-acyl-L-amino acid + a tRNA + H(+). In terms of biological role, hydrolyzes ribosome-free peptidyl-tRNAs (with 1 or more amino acids incorporated), which drop off the ribosome during protein synthesis, or as a result of ribosome stalling. Its function is as follows. Catalyzes the release of premature peptidyl moieties from peptidyl-tRNA molecules trapped in stalled 50S ribosomal subunits, and thus maintains levels of free tRNAs and 50S ribosomes. The chain is Peptidyl-tRNA hydrolase from Rickettsia bellii (strain RML369-C).